Reading from the N-terminus, the 274-residue chain is Small ribosomal subunit protein uS2 (274 aa).

The disordered stretch occupies residues 255 to 274; the sequence is AEAESEDKGEVLYSFDDEEE.

It belongs to the universal ribosomal protein uS2 family.

In Gloeobacter violaceus (strain ATCC 29082 / PCC 7421), this protein is Small ribosomal subunit protein uS2.